The chain runs to 243 residues: UPF0246 protein gbs2036 (243 aa).

It belongs to the UPF0246 family.

This Streptococcus agalactiae serotype III (strain NEM316) protein is UPF0246 protein gbs2036.